The sequence spans 139 residues: uncharacterized protein (139 aa).

Residues 5 to 114 (IFCKIINKEL…IPRFKNDGFG (110 aa)) form the HIT domain. Positions 99–103 (HTHFH) match the Histidine triad motif motif.

This is an uncharacterized protein from Borreliella burgdorferi (strain ATCC 35210 / DSM 4680 / CIP 102532 / B31) (Borrelia burgdorferi).